Consider the following 480-residue polypeptide: NADH-quinone oxidoreductase subunit N 1 (480 aa).

14 helical membrane passes run Leu-12–Phe-32, Thr-38–Leu-58, Phe-78–Ala-98, Phe-106–Asn-126, Leu-128–Ile-148, Phe-163–Phe-183, Leu-203–Val-223, Thr-241–Ile-261, Trp-271–Ile-291, Ser-303–Val-323, Val-326–Ala-346, Ala-372–Phe-392, Phe-396–Ala-416, and Leu-449–Gly-469.

The protein belongs to the complex I subunit 2 family. NDH-1 is composed of 14 different subunits. Subunits NuoA, H, J, K, L, M, N constitute the membrane sector of the complex.

Its subcellular location is the cell inner membrane. It catalyses the reaction a quinone + NADH + 5 H(+)(in) = a quinol + NAD(+) + 4 H(+)(out). In terms of biological role, NDH-1 shuttles electrons from NADH, via FMN and iron-sulfur (Fe-S) centers, to quinones in the respiratory chain. The immediate electron acceptor for the enzyme in this species is believed to be ubiquinone. Couples the redox reaction to proton translocation (for every two electrons transferred, four hydrogen ions are translocated across the cytoplasmic membrane), and thus conserves the redox energy in a proton gradient. This Rhizobium meliloti (strain 1021) (Ensifer meliloti) protein is NADH-quinone oxidoreductase subunit N 1.